A 795-amino-acid polypeptide reads, in one-letter code: Probable alpha,alpha-trehalose-phosphate synthase [UDP-forming] 4 (795 aa).

Positions Pro4–Leu469 are glycosyltransferase.

The protein in the N-terminal section; belongs to the glycosyltransferase 20 family. In the C-terminal section; belongs to the trehalose phosphatase family.

It carries out the reaction D-glucose 6-phosphate + UDP-alpha-D-glucose = alpha,alpha-trehalose 6-phosphate + UDP + H(+). This chain is Probable alpha,alpha-trehalose-phosphate synthase [UDP-forming] 4 (TPS4), found in Arabidopsis thaliana (Mouse-ear cress).